Reading from the N-terminus, the 411-residue chain is LL-diaminopimelate aminotransferase (411 aa).

Residues tyrosine 15 and glycine 42 each coordinate substrate. Residues tyrosine 72, 105–106 (SK), tyrosine 129, asparagine 186, tyrosine 217, and 245–247 (SFS) each bind pyridoxal 5'-phosphate. The substrate site is built by lysine 106, tyrosine 129, and asparagine 186. An N6-(pyridoxal phosphate)lysine modification is found at lysine 248. Pyridoxal 5'-phosphate-binding residues include arginine 256 and asparagine 287. The substrate site is built by asparagine 287 and arginine 382.

This sequence belongs to the class-I pyridoxal-phosphate-dependent aminotransferase family. LL-diaminopimelate aminotransferase subfamily. In terms of assembly, homodimer. Pyridoxal 5'-phosphate is required as a cofactor.

The enzyme catalyses (2S,6S)-2,6-diaminopimelate + 2-oxoglutarate = (S)-2,3,4,5-tetrahydrodipicolinate + L-glutamate + H2O + H(+). It participates in amino-acid biosynthesis; L-lysine biosynthesis via DAP pathway; LL-2,6-diaminopimelate from (S)-tetrahydrodipicolinate (aminotransferase route): step 1/1. Its function is as follows. Involved in the synthesis of meso-diaminopimelate (m-DAP or DL-DAP), required for both lysine and peptidoglycan biosynthesis. Catalyzes the direct conversion of tetrahydrodipicolinate to LL-diaminopimelate. Is also able to use meso-diaminopimelate, lysine or ornithine as substrates. The sequence is that of LL-diaminopimelate aminotransferase from Protochlamydia amoebophila (strain UWE25).